Here is a 267-residue protein sequence, read N- to C-terminus: Coiled-coil domain-containing protein 90B, mitochondrial (267 aa).

Residues 1 to 47 constitute a mitochondrion transit peptide; sequence MKGSQLYRHLSLQGNRLHLHLFQGKKLQLHPSQGHKGTAHRTWKKGF. Positions 142–175 form a coiled coil; it reads LEKSEFATLRAENEKMKIELEHVRQHLLNETNRI. A helical transmembrane segment spans residues 244–266; it reads TVRYMAASVFTCLAIALGFYRLW.

This sequence belongs to the CCDC90 family.

The protein resides in the mitochondrion membrane. In Xenopus tropicalis (Western clawed frog), this protein is Coiled-coil domain-containing protein 90B, mitochondrial (ccdc90b).